Reading from the N-terminus, the 323-residue chain is Dehydrogenase/reductase SDR family member 7B (323 aa).

Topologically, residues 1–4 (MDLT) are cytoplasmic. A helical; Signal-anchor for type II membrane protein membrane pass occupies residues 5 to 25 (SWAIFPLLLASIGVYGLYKLL). Residues 26 to 272 (QKLRSGAYLQ…AVGERRKELL (247 aa)) are Lumenal-facing. NAD(+) contacts are provided by S46 and L48. Position 178 (S178) interacts with substrate. NAD(+) is bound by residues Y191, K195, and T226. Residue Y191 is the Proton acceptor of the active site.

Belongs to the short-chain dehydrogenases/reductases (SDR) family.

It localises to the endoplasmic reticulum membrane. In terms of biological role, putative oxidoreductase. The polypeptide is Dehydrogenase/reductase SDR family member 7B (dhrs7b) (Xenopus laevis (African clawed frog)).